A 401-amino-acid polypeptide reads, in one-letter code: Tumor necrosis factor receptor superfamily member 11B (401 aa).

An N-terminal signal peptide occupies residues 1 to 21; it reads MNKWLCCALLVLLDIIEWTTQ. 4 TNFR-Cys repeats span residues 24-62, 65-105, 107-142, and 145-185; these read LPPK…KTLC, CPDH…NRVC, CEEG…NTVC, and CPDG…DNVC. Cystine bridges form between C41/C54, C44/C62, C65/C80, C83/C97, C87/C105, C107/C118, C124/C142, and C145/C160. An N-linked (GlcNAc...) asparagine glycan is attached at N98. N-linked (GlcNAc...) asparagine glycosylation is found at N165 and N178. A disulfide bond links C166 and C185. 2 Death domains span residues 198 to 269 and 283 to 365; these read DVTL…MVKK and RHLG…THSL. N-linked (GlcNAc...) asparagine glycosylation is present at N289.

As to quaternary structure, homodimer. Interacts with TNFSF10 and TNFSF11. As to expression, highly expressed in liver, lung, stomach, intestines and calvaria. Highly expressed in decidua and placenta, and in embryo.

It is found in the secreted. In terms of biological role, acts as a decoy receptor for TNFSF11/RANKL and thereby neutralizes its function in osteoclastogenesis. Inhibits the activation of osteoclasts and promotes osteoclast apoptosis in vitro. Bone homeostasis seems to depend on the local ratio between TNFSF11 and TNFRSF11B. May also play a role in preventing arterial calcification. May act as decoy receptor for TNFSF10/TRAIL and protect against apoptosis. TNFSF10/TRAIL binding blocks the inhibition of osteoclastogenesis. This chain is Tumor necrosis factor receptor superfamily member 11B (Tnfrsf11b), found in Mus musculus (Mouse).